Consider the following 124-residue polypeptide: Small ribosomal subunit protein uS12 (124 aa).

Aspartate 89 carries the 3-methylthioaspartic acid modification.

Belongs to the universal ribosomal protein uS12 family. As to quaternary structure, part of the 30S ribosomal subunit. Contacts proteins S8 and S17. May interact with IF1 in the 30S initiation complex.

With S4 and S5 plays an important role in translational accuracy. Functionally, interacts with and stabilizes bases of the 16S rRNA that are involved in tRNA selection in the A site and with the mRNA backbone. Located at the interface of the 30S and 50S subunits, it traverses the body of the 30S subunit contacting proteins on the other side and probably holding the rRNA structure together. The combined cluster of proteins S8, S12 and S17 appears to hold together the shoulder and platform of the 30S subunit. This Baumannia cicadellinicola subsp. Homalodisca coagulata protein is Small ribosomal subunit protein uS12.